A 208-amino-acid polypeptide reads, in one-letter code: Protein GrpE (208 aa).

Over residues 1–12 the composition is skewed to basic and acidic residues; it reads MTNKDESVEKNT. The disordered stretch occupies residues 1–49; that stretch reads MTNKDESVEKNTESTVEVTNVKQNIDDSVEQTEESKGHLQDEAIEETSD. Positions 13–23 are enriched in polar residues; the sequence is ESTVEVTNVKQ.

It belongs to the GrpE family. As to quaternary structure, homodimer.

It localises to the cytoplasm. Functionally, participates actively in the response to hyperosmotic and heat shock by preventing the aggregation of stress-denatured proteins, in association with DnaK and GrpE. It is the nucleotide exchange factor for DnaK and may function as a thermosensor. Unfolded proteins bind initially to DnaJ; upon interaction with the DnaJ-bound protein, DnaK hydrolyzes its bound ATP, resulting in the formation of a stable complex. GrpE releases ADP from DnaK; ATP binding to DnaK triggers the release of the substrate protein, thus completing the reaction cycle. Several rounds of ATP-dependent interactions between DnaJ, DnaK and GrpE are required for fully efficient folding. The polypeptide is Protein GrpE (Staphylococcus aureus (strain bovine RF122 / ET3-1)).